Here is a 523-residue protein sequence, read N- to C-terminus: Sorting nexin-2 (523 aa).

The tract at residues 1–104 is disordered; the sequence is MAAEREPPPL…EPSPAVTPVT (104 aa). 2 stretches are compositionally biased toward low complexity: residues 27-48 and 93-104; these read LFTS…TSLP and SSEPSPAVTPVT. S97 carries the phosphoserine modification. Residues T101 and T104 each carry the phosphothreonine modification. A phosphoserine mark is found at S117 and S119. Residues 140 to 269 enclose the PX domain; the sequence is FDIEIGVSDP…QFLESSELPR (130 aa). Positions 183, 185, 211, and 235 each coordinate a 1,2-diacyl-sn-glycero-3-phospho-(1D-myo-inositol-3-phosphate). Position 185 is a phosphoserine (S185). Residues 260-523 form an interaction with RhoG region; the sequence is QFLESSELPR…AFLPEAKAIA (264 aa). A Phosphoserine modification is found at S277. Residues 278-295 are membrane-binding amphipathic helix; it reads GAGILRMVNKAADAVNKM. The region spanning 299–523 is the BAR domain; that stretch reads MNESDAWFEE…AFLPEAKAIA (225 aa). N6-acetyllysine is present on K473.

The protein belongs to the sorting nexin family. As to quaternary structure, predominantly forms heterodimers with BAR domain-containing sorting nexins SNX5, SNX6 and SNX32; can self-associate to form homodimers. The heterodimers are proposed to self-assemble into helical arrays on the membrane to stabilize and expand local membrane curvature underlying endosomal tubule formation. Thought to be a component of the originally described retromer complex (also called SNX-BAR retromer) which is a pentamer containing the heterotrimeric retromer cargo-selective complex (CSC), also described as vacuolar protein sorting subcomplex (VPS), and a heterodimeric membrane-deforming subcomplex formed between SNX1 or SNX2 and SNX5 or SNX6 (also called SNX-BAR subcomplex); the respective CSC and SNX-BAR subcomplexes associate with low affinity. Interacts with SNX5, SNX6, SNX32, VPS26A, VPS29, VPS35, FNBP1, KALRN, RHOG (GDP-bound form).

The protein localises to the early endosome membrane. It is found in the cell projection. It localises to the lamellipodium. In terms of biological role, involved in several stages of intracellular trafficking. Interacts with membranes containing phosphatidylinositol 3-phosphate (PtdIns(3P)) or phosphatidylinositol 3,5-bisphosphate (PtdIns(3,5)P2). Acts in part as component of the retromer membrane-deforming SNX-BAR subcomplex. The SNX-BAR retromer mediates retrograde transport of cargo proteins from endosomes to the trans-Golgi network (TGN) and is involved in endosome-to-plasma membrane transport for cargo protein recycling. The SNX-BAR subcomplex functions to deform the donor membrane into a tubular profile called endosome-to-TGN transport carrier (ETC). Can sense membrane curvature and has in vitro vesicle-to-membrane remodeling activity. Required for retrograde endosome-to-TGN transport of TGN38. Promotes KALRN- and RHOG-dependent but retromer-independent membrane remodeling such as lamellipodium formation; the function is dependent on GEF activity of KALRN. The sequence is that of Sorting nexin-2 (SNX2) from Pongo abelii (Sumatran orangutan).